The chain runs to 488 residues: ATP synthase subunit beta (488 aa).

Position 155 to 162 (G155 to T162) interacts with ATP. Residues G467–N488 form a disordered region.

Belongs to the ATPase alpha/beta chains family. F-type ATPases have 2 components, CF(1) - the catalytic core - and CF(0) - the membrane proton channel. CF(1) has five subunits: alpha(3), beta(3), gamma(1), delta(1), epsilon(1). CF(0) has three main subunits: a(1), b(2) and c(9-12). The alpha and beta chains form an alternating ring which encloses part of the gamma chain. CF(1) is attached to CF(0) by a central stalk formed by the gamma and epsilon chains, while a peripheral stalk is formed by the delta and b chains.

The protein resides in the cell membrane. The catalysed reaction is ATP + H2O + 4 H(+)(in) = ADP + phosphate + 5 H(+)(out). Its function is as follows. Produces ATP from ADP in the presence of a proton gradient across the membrane. The catalytic sites are hosted primarily by the beta subunits. This chain is ATP synthase subunit beta, found in Lacticaseibacillus casei (strain BL23) (Lactobacillus casei).